The chain runs to 2289 residues: DNA polymerase II large subunit (2289 aa).

Disordered regions lie at residues 279–330 (IGSD…SPRA) and 544–563 (SDTNSASGNTSLRANTNTDD). The segment covering 292 to 304 (GEADIVKTDKDTN) has biased composition (basic and acidic residues). A compositionally biased stretch (acidic residues) spans 305 to 318 (ESETEDGIDNDDYN). Polar residues predominate over residues 544–557 (SDTNSASGNTSLRA). DOD-type homing endonuclease domains lie at 1222 to 1367 (LLGY…RLGI) and 1755 to 1911 (LLGQ…RLGV).

This sequence belongs to the archaeal DNA polymerase II family. Heterodimer of a large subunit and a small subunit. This protein undergoes a protein self splicing that involves a post-translational excision of the intervening region (intein) followed by peptide ligation.

The catalysed reaction is DNA(n) + a 2'-deoxyribonucleoside 5'-triphosphate = DNA(n+1) + diphosphate. It carries out the reaction Exonucleolytic cleavage in the 3'- to 5'-direction to yield nucleoside 5'-phosphates.. In terms of biological role, possesses two activities: a DNA synthesis (polymerase) and an exonucleolytic activity that degrades single-stranded DNA in the 3'- to 5'-direction. Has a template-primer preference which is characteristic of a replicative DNA polymerase. The protein is DNA polymerase II large subunit of Haloquadratum walsbyi (strain DSM 16790 / HBSQ001).